The chain runs to 160 residues: 3-dehydroquinate dehydratase (160 aa).

Tyrosine 22 acts as the Proton acceptor in catalysis. Positions 73, 79, and 86 each coordinate substrate. Histidine 99 acts as the Proton donor in catalysis. Residues 100 to 101 (IS) and arginine 110 each bind substrate.

It belongs to the type-II 3-dehydroquinase family. As to quaternary structure, homododecamer.

It catalyses the reaction 3-dehydroquinate = 3-dehydroshikimate + H2O. Its pathway is metabolic intermediate biosynthesis; chorismate biosynthesis; chorismate from D-erythrose 4-phosphate and phosphoenolpyruvate: step 3/7. Functionally, catalyzes a trans-dehydration via an enolate intermediate. This chain is 3-dehydroquinate dehydratase, found in Sulfurimonas denitrificans (strain ATCC 33889 / DSM 1251) (Thiomicrospira denitrificans (strain ATCC 33889 / DSM 1251)).